The sequence spans 429 residues: Enolase (429 aa).

(2R)-2-phosphoglycerate is bound at residue glutamine 163. The active-site Proton donor is the glutamate 205. Mg(2+) contacts are provided by aspartate 242, glutamate 285, and aspartate 312. 4 residues coordinate (2R)-2-phosphoglycerate: lysine 337, arginine 366, serine 367, and lysine 388. Lysine 337 acts as the Proton acceptor in catalysis.

The protein belongs to the enolase family. The cofactor is Mg(2+).

The protein localises to the cytoplasm. The protein resides in the secreted. Its subcellular location is the cell surface. The catalysed reaction is (2R)-2-phosphoglycerate = phosphoenolpyruvate + H2O. It participates in carbohydrate degradation; glycolysis; pyruvate from D-glyceraldehyde 3-phosphate: step 4/5. In terms of biological role, catalyzes the reversible conversion of 2-phosphoglycerate (2-PG) into phosphoenolpyruvate (PEP). It is essential for the degradation of carbohydrates via glycolysis. The sequence is that of Enolase from Azoarcus sp. (strain BH72).